The chain runs to 521 residues: Cytochrome P450 1A1 (521 aa).

Phe229 provides a ligand contact to substrate. Cys463 is a heme binding site.

Belongs to the cytochrome P450 family. Heme serves as cofactor.

It is found in the endoplasmic reticulum membrane. The protein localises to the microsome membrane. The enzyme catalyses an organic molecule + reduced [NADPH--hemoprotein reductase] + O2 = an alcohol + oxidized [NADPH--hemoprotein reductase] + H2O + H(+). Functionally, cytochromes P450 are a group of heme-thiolate monooxygenases. They oxidize a variety of structurally unrelated compounds, including steroids, fatty acids, and xenobiotics. The sequence is that of Cytochrome P450 1A1 (cyp1a1) from Pleuronectes platessa (European plaice).